Consider the following 230-residue polypeptide: Small ribosomal subunit protein uS3c (230 aa).

One can recognise a KH type-2 domain in the interval 39–109; that stretch reads IRSFIHGKLS…QIRVNVVEIS (71 aa).

It belongs to the universal ribosomal protein uS3 family. As to quaternary structure, part of the 30S ribosomal subunit.

It is found in the plastid. It localises to the chloroplast. This is Small ribosomal subunit protein uS3c (rps3) from Porphyra purpurea (Red seaweed).